A 249-amino-acid chain; its full sequence is Probable phosphatase Spea_1436 (249 aa).

9 residues coordinate Zn(2+): H8, H10, H16, H41, E74, H102, H132, D193, and H195.

This sequence belongs to the PHP family. Zn(2+) is required as a cofactor.

This is Probable phosphatase Spea_1436 from Shewanella pealeana (strain ATCC 700345 / ANG-SQ1).